The primary structure comprises 514 residues: 2,3-bisphosphoglycerate-independent phosphoglycerate mutase (514 aa).

Residues D13 and S69 each coordinate Mn(2+). Catalysis depends on S69, which acts as the Phosphoserine intermediate. Substrate contacts are provided by residues H128, 158–159 (RD), R189, R195, 263–266 (RADR), and K336. Mn(2+) is bound by residues D402, H406, D443, H444, and H461.

The protein belongs to the BPG-independent phosphoglycerate mutase family. In terms of assembly, monomer. Requires Mn(2+) as cofactor.

The enzyme catalyses (2R)-2-phosphoglycerate = (2R)-3-phosphoglycerate. It participates in carbohydrate degradation; glycolysis; pyruvate from D-glyceraldehyde 3-phosphate: step 3/5. Catalyzes the interconversion of 2-phosphoglycerate and 3-phosphoglycerate. This is 2,3-bisphosphoglycerate-independent phosphoglycerate mutase from Akkermansia muciniphila (strain ATCC BAA-835 / DSM 22959 / JCM 33894 / BCRC 81048 / CCUG 64013 / CIP 107961 / Muc).